Consider the following 597-residue polypeptide: K(+) efflux antiporter 6 (597 aa).

Residues 1–35 form the signal peptide; that stretch reads MVEGRRRRRFSLSSQQLALLLLLLSFFLCFSVASP. Helical transmembrane passes span 177–197, 201–221, 224–244, 257–277, 287–307, 321–341, 351–371, 396–416, 440–460, 461–481, 499–519, and 543–563; these read LISD…AFAC, PVIT…LNFI, MVQV…ALGL, VAVL…GITV, GVFV…KFLM, IGIL…LPVL, MLSI…LSIL, LAAV…GLSL, IEPI…MLVN, VHFL…VIII, TALL…VLLS, and LVTT…GILL.

The protein belongs to the monovalent cation:proton antiporter 2 (CPA2) transporter (TC 2.A.37) family. KEA (TC 2.A.37.1) subfamily. As to expression, expressed in roots, stems, leaves, flowers and silique.

The protein localises to the golgi apparatus membrane. It is found in the golgi apparatus. It localises to the trans-Golgi network membrane. The protein resides in the prevacuolar compartment membrane. Its subcellular location is the endomembrane system. It catalyses the reaction K(+)(in) + H(+)(out) = K(+)(out) + H(+)(in). Its function is as follows. Electroneutral K(+)/H(+) efflux antiporter involved in K(+) homeostasis and osmotic adjustment. Together with KEA4 and KEA5, promotes growth and development, and facilitates endosomal pH and ions homeostasis, as well as salt tolerance (e.g. K(+), NaCl and LiCl), probably by supporting cell wall biosynthesis during rapid etiolated seedling growth. The protein is K(+) efflux antiporter 6 of Arabidopsis thaliana (Mouse-ear cress).